Reading from the N-terminus, the 248-residue chain is ATP synthase subunit a, chloroplastic (248 aa).

Helical transmembrane passes span Gln38 to Val58, Val96 to Leu116, Ile135 to Ser155, Leu200 to Leu220, and Gly221 to Gly241.

Belongs to the ATPase A chain family. F-type ATPases have 2 components, CF(1) - the catalytic core - and CF(0) - the membrane proton channel. CF(1) has five subunits: alpha(3), beta(3), gamma(1), delta(1), epsilon(1). CF(0) has four main subunits: a, b, b' and c.

It is found in the plastid. The protein resides in the chloroplast thylakoid membrane. Key component of the proton channel; it plays a direct role in the translocation of protons across the membrane. This chain is ATP synthase subunit a, chloroplastic, found in Amborella trichopoda.